Consider the following 130-residue polypeptide: MAVVTFKGLGRRKSSTALVKLTPGSGKLVINNRKAEDYFPNKIVIQDMRQPLEVTKTASIYDINVVVNGGGFTGQAGAIRLGIARALVNMNPELKKQLKQHKLVTRDARVKERKKFGLYGARRAPQFTKR.

Belongs to the universal ribosomal protein uS9 family.

The chain is Small ribosomal subunit protein uS9 from Mycoplasmoides gallisepticum (strain R(low / passage 15 / clone 2)) (Mycoplasma gallisepticum).